Reading from the N-terminus, the 213-residue chain is Redox-sensing transcriptional repressor Rex (213 aa).

The H-T-H motif DNA-binding region spans 17–56 (LYYRIFKRFHSENIEKASSKQIAEAIGIDSATVRRDFSYF). Residue 91-96 (GVGNIG) participates in NAD(+) binding.

Belongs to the transcriptional regulatory Rex family. Homodimer.

Its subcellular location is the cytoplasm. Its function is as follows. Modulates transcription in response to changes in cellular NADH/NAD(+) redox state. The sequence is that of Redox-sensing transcriptional repressor Rex from Streptococcus mutans serotype c (strain ATCC 700610 / UA159).